We begin with the raw amino-acid sequence, 106 residues long: Serine rich endogenous peptide 7 (106 aa).

A signal peptide spans methionine 1–serine 26. 2 stretches are compositionally biased toward basic and acidic residues: residues glycine 46–histidine 56 and arginine 65–arginine 77. Positions glycine 46–serine 106 are disordered. Short sequence motifs (SCOOP motif) lie at residues leucine 58–histidine 72 and glycine 86–arginine 100. 2 consecutive short sequence motifs (sxS motif essential for MIK2 binding) follow at residues serine 64–serine 66 and serine 92–serine 94.

It belongs to the serine rich endogenous peptide (SCOOP) phytocytokine family. In terms of assembly, interacts with MIK2 (via extracellular leucine-rich repeat domain); this interaction triggers the formation of complex between MIK2 and the BAK1/SERK3 and SERK4 coreceptors, and subsequent BAK1 activation by phosphorylation. Mostly expressed in roots, and, to a lower extent, in seedlings shoots.

The protein localises to the cell membrane. The protein resides in the secreted. It is found in the extracellular space. Its subcellular location is the apoplast. Functionally, brassicaceae-specific phytocytokine (plant endogenous peptide released into the apoplast) perceived by MIK2 in a BAK1/SERK3 and SERK4 coreceptors-dependent manner, that modulates various physiological and antimicrobial processes including growth prevention and reactive oxygen species (ROS) response regulation. In Arabidopsis thaliana (Mouse-ear cress), this protein is Serine rich endogenous peptide 7.